The primary structure comprises 550 residues: Chaperonin GroEL (550 aa).

ATP contacts are provided by residues threonine 29–proline 32, lysine 50, aspartate 86–threonine 90, glycine 418, and aspartate 499.

The protein belongs to the chaperonin (HSP60) family. In terms of assembly, forms a cylinder of 14 subunits composed of two heptameric rings stacked back-to-back. Interacts with the co-chaperonin GroES.

It localises to the cytoplasm. The catalysed reaction is ATP + H2O + a folded polypeptide = ADP + phosphate + an unfolded polypeptide.. Together with its co-chaperonin GroES, plays an essential role in assisting protein folding. The GroEL-GroES system forms a nano-cage that allows encapsulation of the non-native substrate proteins and provides a physical environment optimized to promote and accelerate protein folding. The chain is Chaperonin GroEL from Wolbachia sp. subsp. Brugia malayi (strain TRS).